The chain runs to 105 residues: Guanyl-specific ribonuclease U1 (105 aa).

Pyrrolidone carboxylic acid is present on Q1. 2 disulfide bridges follow: C8-C103 and C51-C87. H37 is an active-site residue. Catalysis depends on E57, which acts as the Proton acceptor. H92 functions as the Proton donor in the catalytic mechanism.

The protein belongs to the ribonuclease N1/T1 family.

The catalysed reaction is [RNA] containing guanosine + H2O = an [RNA fragment]-3'-guanosine-3'-phosphate + a 5'-hydroxy-ribonucleotide-3'-[RNA fragment].. The chain is Guanyl-specific ribonuclease U1 from Ustilago sphaerogena (Smut fungus).